The primary structure comprises 79 residues: Centromere protein X (79 aa).

Residue methionine 1 is modified to N-acetylmethionine.

This sequence belongs to the CENP-X/MHF2 family. As to quaternary structure, heterodimer with CENPX, sometimes called MHF; this interaction stabilizes both partners. MHF heterodimers can assemble to form tetrameric structures. MHF also coassemble with CENPT-CENPW heterodimers at centromeres to form the tetrameric CENP-T-W-S-X complex. Forms a discrete complex with FANCM and CENPX, called FANCM-MHF; this interaction, probably mediated by direct binding between CENPS and FANCM, leads to synergistic activation of double-stranded DNA binding and strongly stimulates FANCM-mediated DNA remodeling. Recruited by FANCM to the Fanconi anemia (FA) core complex, which consists of CENPS, CENPX, FANCA, FANCB, FANCC, FANCE, FANCF, FANCG, FANCL, FANCM, FAAP24 and FAAP100. The FA core complex associates with Bloom syndrome (BLM) complex, which consists of at least BLM, DNA topoisomerase 3-alpha (TOP3A), RMI1/BLAP75, RPA1/RPA70 and RPA2/RPA32. The super complex between FA and BLM is called BRAFT.

Its subcellular location is the nucleus. The protein resides in the chromosome. The protein localises to the centromere. It localises to the kinetochore. Functionally, DNA-binding component of the Fanconi anemia (FA) core complex. Required for the normal activation of the FA pathway, leading to monoubiquitination of the FANCI-FANCD2 complex in response to DNA damage, cellular resistance to DNA cross-linking drugs, and prevention of chromosomal breakage. In complex with CENPS (MHF heterodimer), crucial cofactor for FANCM in both binding and ATP-dependent remodeling of DNA. Stabilizes FANCM. In complex with CENPS and FANCM (but not other FANC proteins), rapidly recruited to blocked forks and promotes gene conversion at blocked replication forks. In complex with CENPS, CENPT and CENPW (CENP-T-W-S-X heterotetramer), involved in the formation of a functional kinetochore outer plate, which is essential for kinetochore-microtubule attachment and faithful mitotic progression. As a component of MHF and CENP-T-W-S-X complexes, binds DNA and bends it to form a nucleosome-like structure. DNA-binding function is fulfilled in the presence of CENPS, with the following preference for DNA substates: Holliday junction &gt; double-stranded &gt; splay arm &gt; single-stranded. Does not bind DNA on its own. In Bos taurus (Bovine), this protein is Centromere protein X (CENPX).